A 959-amino-acid chain; its full sequence is Glutamate receptor 3.4 (959 aa).

An N-terminal signal peptide occupies residues 1–35 (MGFLVMIREVSMAKAIRVVLLCVSVLWVVPKECAC). Topologically, residues 36–613 (RSNFSRNSSS…SPWSFLKPFT (578 aa)) are extracellular. Residues N38, N42, N108, N365, N378, N404, N443, N461, and N576 are each glycosylated (N-linked (GlcNAc...) asparagine). The helical transmembrane segment at 614-634 (IEMWAVTGGFFLFVGAMVWIL) threads the bilayer. The Cytoplasmic segment spans residues 635–643 (EHRFNQEFR). A helical transmembrane segment spans residues 644–664 (GPPRRQLITIFWFSFSTMFFS). The Cytoplasmic portion of the chain corresponds to 665–675 (HRENTVSSLGR). Residues 676–696 (FVLIIWLFVVLIINSSYTASL) form a helical membrane-spanning segment. At 697–857 (TSILTIRQLT…SEDSQLSLKS (161 aa)) the chain is on the extracellular side. The helical transmembrane segment at 858 to 878 (FWGLFLICGITCFMALTVFFW) threads the bilayer. The Cytoplasmic portion of the chain corresponds to 879-959 (RVFWQYQRLL…TSQSQHGEIT (81 aa)). Disordered regions lie at residues 893–913 (DEER…SRAP) and 936–959 (KSSK…GEIT). Residues 943 to 959 (STQSAAGTSQSQHGEIT) show a composition bias toward low complexity.

This sequence belongs to the glutamate-gated ion channel (TC 1.A.10.1) family. Forms a heteromeric channel with GLR3.2. In terms of tissue distribution, highly expressed in roots and at lower levels in leaves and siliques. Expressed in seedlings, cotyledons, roots (e.g. root hairs, epidermis and cortex cells), stems, leaves (e.g. vascular bundles and hydathodes), and siliques. Expressed in root phloem.

It localises to the cell membrane. The protein localises to the plastid. Its subcellular location is the chloroplast membrane. Its function is as follows. Glutamate-gated receptor that probably acts as a non-selective cation channel, at least in hypocotyls. Can be triggered by Asn, Ser, Gly and, to a lower extent, Ala, Cys and Glu. May be involved in light-signal transduction and calcium homeostasis via the regulation of calcium influx into cells. Plays an important role in the calcium-based fast transmission of environmental stress. Acts as a negative regulator of lateral root initiation and development. May restrict primordia numbers and position along the root axis by a signaling process originating in the phloem. AtGLR3.4-mediated cytosolic calcium influx may be involved in the regulation of seed germination under salt stress by modulating sodium accumulation through the SOS pathway. This is Glutamate receptor 3.4 from Arabidopsis thaliana (Mouse-ear cress).